Here is a 770-residue protein sequence, read N- to C-terminus: Formate acetyltransferase (770 aa).

Positions 5-635 (NEMQKLAWAG…KTGNTPDGRR (631 aa)) constitute a PFL domain. The active-site S-acetylcysteine intermediate is the C419. Catalysis depends on C420, which acts as the Cysteine radical intermediate. The Glycine radical domain occupies 642–770 (PGANPMHGRD…VITRTFTESM (129 aa)). G745 is subject to Glycine radical.

It belongs to the glycyl radical enzyme (GRE) family. PFL subfamily. As to quaternary structure, homodimer.

It is found in the cytoplasm. The enzyme catalyses formate + acetyl-CoA = pyruvate + CoA. It participates in fermentation; pyruvate fermentation; formate from pyruvate: step 1/1. Catalyzes the conversion of pyruvate to formate and acetyl-CoA. In Haemophilus influenzae (strain ATCC 51907 / DSM 11121 / KW20 / Rd), this protein is Formate acetyltransferase (pflB).